A 2437-amino-acid chain; its full sequence is Neurogenic locus notch homolog protein 1 (2437 aa).

The N-terminal stretch at 1 to 20 is a signal peptide; sequence MNRFLVKLTLLTAASLATVA. 4 EGF-like domains span residues 21-57, 58-98, 101-138, and 139-175; these read QGQR…AQCQ, FPNP…RLCL, VNHA…KTCQ, and LADP…QTCR. Topologically, residues 21–1726 are extracellular; the sequence is QGQRCSEYCQ…GGPPKTGEMY (1706 aa). Intrachain disulfides connect C25–C35, C29–C45, C47–C56, C62–C73, C67–C86, C88–C97, C105–C116, C110–C126, C128–C137, C143–C154, C148–C163, C165–C174, C181–C194, C188–C203, C205–C214, C221–C232, C226–C242, C244–C253, C260–C271, C265–C280, C282–C291, C298–C311, C305–C320, C322–C331, C338–C349, C343–C358, C360–C369, C375–C386, C380–C397, C399–C408, C415–C428, C422–C437, C439–C448, C455–C466, C460–C475, C477–C486, C493–C503, C498–C512, C514–C523, C530–C541, C535–C550, C552–C561, C568–C578, C573–C587, C589–C598, C605–C616, C610–C625, C627–C636, C643–C653, C648–C662, C664–C673, C680–C691, C685–C700, C702–C711, C718–C728, C723–C737, C739–C748, C755–C766, C760–C775, C777–C786, C793–C804, C798–C813, C815–C824, C831–C842, C836–C853, C855–C864, C871–C882, C876–C891, C893–C902, C909–C920, C914–C929, C931–C940, C947–C958, C952–C967, C969–C978, C985–C996, C990–C1005, C1007–C1016, C1023–C1034, C1028–C1043, C1045–C1054, C1061–C1072, C1066–C1081, C1083–C1092, C1099–C1120, C1114–C1129, C1131–C1140, C1147–C1158, C1152–C1167, C1169–C1178, C1185–C1196, C1190–C1205, C1207–C1216, C1223–C1242, C1236–C1251, C1253–C1262, C1269–C1282, C1274–C1291, C1293–C1302, C1309–C1320, C1314–C1332, C1334–C1343, C1350–C1361, C1355–C1370, C1372–C1381, C1389–C1400, C1394–C1411, C1413–C1422, C1447–C1470, C1452–C1465, and C1461–C1477. The EGF-like 5; calcium-binding domain maps to 177-215; that stretch reads DVNECAVSPSPCRNGGTCINEVGSYLCRCPPEYTGPHCQ. An EGF-like 6 domain is found at 217–254; that stretch reads LYQPCLPSPCRSGGTCVQTSDTTHTCSCLPGFTGQTCE. T231 carries an O-linked (Fuc...) threonine; alternate glycan. O-linked (GalNAc...) threonine; alternate glycosylation occurs at T231. The 37-residue stretch at 256-292 folds into the EGF-like 7; calcium-binding domain; the sequence is NVDDCTQHACENGGPCIDGINTYNCHCDKHWTGQYCT. In terms of domain architecture, EGF-like 8; calcium-binding spans 294–332; sequence DVDECELSPNACQNGGTCHNTIGGFHCVCVNGWTGDDCS. One can recognise an EGF-like 9; calcium-binding domain in the interval 334–370; sequence NIDDCASAACSHGATCHDRVASFFCECPHGRTGLLCH. The region spanning 371 to 409 is the EGF-like 10 domain; sequence LDDACISNPCQKGSNCDTNPVSGKAICTCPPGYTGSACN. The EGF-like 11; calcium-binding domain occupies 411-449; the sequence is DIDECSLGANPCEHGGRCLNTKGSFQCKCLQGYEGPRCE. Residues 451 to 487 form the EGF-like 12; calcium-binding domain; that stretch reads DVNECKSNPCQNDATCLDQIGGFHCICMPGYEGVFCQ. An EGF-like 13; calcium-binding domain is found at 489–524; the sequence is NSDDCASQPCLNGKCIDKINSFHCECPKGFSGSLCQ. The EGF-like 14; calcium-binding domain maps to 526 to 562; that stretch reads DVDECASTPCKNGAKCTDGPNKYTCECTPGFSGIHCE. The EGF-like 15; calcium-binding domain occupies 564 to 599; the sequence is DINECASSPCHYGVCRDGVASFTCDCRPGYTGRLCE. The EGF-like 16; calcium-binding domain occupies 601-637; sequence NINECLSQPCRNGGTCQDRENAYICTCPKGTTGVNCE. The 36-residue stretch at 639-674 folds into the EGF-like 17; calcium-binding domain; sequence NIDDCKRKPCDYGKCIDKINGYECVCEPGYSGSMCN. Residues 676-712 enclose the EGF-like 18; calcium-binding domain; it reads NIDDCALNPCHNGGTCIDGVNSFTCLCPDGFRDATCL. The 36-residue stretch at 714 to 749 folds into the EGF-like 19; calcium-binding domain; that stretch reads QHNECSSNPCIHGSCLDQINSYRCVCEAGWMGRNCD. Residues 751–787 enclose the EGF-like 20; calcium-binding domain; the sequence is NINECLSNPCVNGGTCKDMTSGYLCTCRAGFSGPNCQ. The EGF-like 21; calcium-binding domain occupies 789 to 825; sequence NINECASNPCLNQGSCIDDVAGFKCNCMLPYTGEVCE. Positions 827-865 constitute an EGF-like 22 domain; that stretch reads VLAPCSPRPCKNGGVCRESEDFQSFSCNCPAGWQGQTCE. In terms of domain architecture, EGF-like 23; calcium-binding spans 867 to 903; sequence DINECVRNPCTNGGVCENLRGGFQCRCNPGFTGALCE. The 37-residue stretch at 905–941 folds into the EGF-like 24; calcium-binding domain; that stretch reads DIDDCEPNPCSNGGVCQDRVNGFVCVCLAGFRGERCA. Residues 943–979 enclose the EGF-like 25; calcium-binding domain; it reads DIDECVSAPCRNGGNCTDCVNSYTCSCPAGFSGINCE. N957 carries N-linked (GlcNAc...) asparagine glycosylation. The 37-residue stretch at 981–1017 folds into the EGF-like 26 domain; sequence NTPDCTESSCFNGGTCVDGISSFSCVCLPGFTGNYCQ. The EGF-like 27; calcium-binding domain occupies 1019–1055; sequence DVNECDSRPCQNGGSCQDGYGTYKCTCPHGYTGLNCQ. EGF-like domains are found at residues 1057–1093 and 1095–1141; these read LVRW…IYCD and PSVS…SYCQ. An EGF-like 30; calcium-binding domain is found at 1143 to 1179; the sequence is QVDECQPNPCQNGATCTDYLGGYSCECVPGYHGMNCS. N1177 is a glycosylation site (N-linked (GlcNAc...) asparagine). Residues 1181-1217 form the EGF-like 31; calcium-binding domain; the sequence is EINECLSQPCQNGGTCIDLVNTYKCSCPRGTQGVHCE. The EGF-like 32; calcium-binding domain occupies 1219–1263; that stretch reads DIDDCSPSVDPLTGEPRCFNGGRCVDRVGGYGCVCPAGFVGERCE. EGF-like domains are found at residues 1265-1303, 1305-1344, 1346-1382, and 1385-1423; these read DVNE…KRCE, VFNG…SSCE, DSQS…HECQ, and MDSP…LLCH. O-linked (Fuc...) threonine; alternate glycosylation is present at T1399. Residue T1399 is glycosylated (O-linked (GalNAc...) threonine; alternate). LNR repeat units lie at residues 1447–1487, 1488–1525, and 1526–1566; these read CEIA…PWQN, CSAA…LEGQ, and CNPL…VPQK. A glycan (N-linked (GlcNAc...) asparagine) is linked at N1487. Intrachain disulfides connect C1488–C1512, C1494–C1507, C1503–C1519, C1526–C1552, C1534–C1547, and C1543–C1559. N1585 is a glycosylation site (N-linked (GlcNAc...) asparagine). Residues 1727–1747 traverse the membrane as a helical segment; sequence PMFLVLLALAVLALAAVGVVV. The Cytoplasmic portion of the chain corresponds to 1748–2437; the sequence is SRKRKREHGQ…QMNHIPEAFK (690 aa). Residues 1770 to 1790 form a disordered region; it reads KKKRREPVGEDSVGLKPLKNS. 6 ANK repeats span residues 1867–1910, 1915–1944, 1948–1978, 1982–2011, 2015–2044, and 2048–2077; these read DGFT…NLHN, TGET…DANV, MGRT…DLDA, DGTT…DPNA, SGKS…NKDL, and KEET…NRDI. 2 disordered regions span residues 2127 to 2174 and 2356 to 2437; these read IKPS…GGIM and RMAP…EAFK. Over residues 2356-2387 the composition is skewed to polar residues; that stretch reads RMAPPISSTQFLTPPSQHSYSNPMDNTPNHQQ. Low complexity predominate over residues 2396–2411; sequence PSAGSPDQWSSSSPHS. Positions 2412 to 2429 are enriched in polar residues; it reads NLSDWSEGISSPPTSMQM.

This sequence belongs to the NOTCH family. Post-translationally, synthesized in the endoplasmic reticulum as an inactive form which is proteolytically cleaved by a furin-like convertase in the trans-Golgi network before it reaches the plasma membrane to yield an active, ligand-accessible form. Cleavage results in a C-terminal fragment N(TM) and a N-terminal fragment N(EC). Following ligand binding, it is cleaved by adam17 to yield a membrane-associated intermediate fragment called notch extracellular truncation (NEXT). Following endocytosis, this fragment is then cleaved by presenilin dependent gamma-secretase to release a Notch-derived peptide containing the intracellular domain (NICD) from the membrane. O-glycosylated on the EGF-like domains. Contains both O-linked fucose and O-linked glucose. O-linked glycosylation by galnt11 is involved in determination of left/right symmetry: glycosylation promotes activation of notch1, possibly by promoting cleavage by adam17, modulating the balance between motile and immotile (sensory) cilia at the left-right organiser (LRO).

It is found in the cell membrane. It localises to the nucleus. In terms of biological role, functions as a receptor for membrane-bound ligands Jagged-1 (JAG1), Jagged-2 (JAG2) and Delta-1 (DLL1) to regulate cell-fate determination. Upon ligand activation through the released notch intracellular domain (NICD) it forms a transcriptional activator complex with RBPJ/RBPSUH and activates genes of the enhancer of split locus. Affects the implementation of differentiation, proliferation and apoptotic programs. Involved in angiogenesis; negatively regulates endothelial cell proliferation and migration and angiogenic sprouting. Involved in the maturation of both CD4(+) and CD8(+) cells in the thymus. Important for follicular differentiation and possibly cell fate selection within the follicle. During cerebellar development, functions as a receptor for neuronal DNER and is involved in the differentiation of Bergmann glia. Represses neuronal and myogenic differentiation. May play an essential role in postimplantation development, probably in some aspect of cell specification and/or differentiation. May be involved in mesoderm development, somite formation and neurogenesis. Involved in determination of left/right symmetry by modulating the balance between motile and immotile (sensory) cilia at the left-right organiser (LRO). This Danio rerio (Zebrafish) protein is Neurogenic locus notch homolog protein 1 (notch1a).